We begin with the raw amino-acid sequence, 157 residues long: 6,7-dimethyl-8-ribityllumazine synthase (157 aa).

5-amino-6-(D-ribitylamino)uracil contacts are provided by residues Phe-30, 64–66, and 88–90; these read ALE and CII. Position 93-94 (93-94) interacts with (2S)-2-hydroxy-3-oxobutyl phosphate; that stretch reads ET. The active-site Proton donor is His-96. Asn-121 serves as a coordination point for 5-amino-6-(D-ribitylamino)uracil. Arg-135 provides a ligand contact to (2S)-2-hydroxy-3-oxobutyl phosphate.

The protein belongs to the DMRL synthase family.

The enzyme catalyses (2S)-2-hydroxy-3-oxobutyl phosphate + 5-amino-6-(D-ribitylamino)uracil = 6,7-dimethyl-8-(1-D-ribityl)lumazine + phosphate + 2 H2O + H(+). It participates in cofactor biosynthesis; riboflavin biosynthesis; riboflavin from 2-hydroxy-3-oxobutyl phosphate and 5-amino-6-(D-ribitylamino)uracil: step 1/2. In terms of biological role, catalyzes the formation of 6,7-dimethyl-8-ribityllumazine by condensation of 5-amino-6-(D-ribitylamino)uracil with 3,4-dihydroxy-2-butanone 4-phosphate. This is the penultimate step in the biosynthesis of riboflavin. This chain is 6,7-dimethyl-8-ribityllumazine synthase, found in Albidiferax ferrireducens (strain ATCC BAA-621 / DSM 15236 / T118) (Rhodoferax ferrireducens).